The following is a 222-amino-acid chain: MFPFKVRKWMGLACFRSLVVSSSSIRQKKLIHKLQEEKAFREEMRHFREKIEDFREEMWNFRSKMRAFRGEILGFWEEDRLFWEEEKTFWKEEKAFWEMEKSFREEEKAFWKKYRIFWKEDRAFWKEDNALWERDRNLLQEDKALWEEEKALWVEERALLEEEKVLWEDKKTLWEEENALWEEEKAAWVEGVVPVVEQQVLEGGHHHVSGRPRSPASSRGRA.

Coiled coils occupy residues 34–62 (LQEE…WNFR) and 129–188 (NALW…KAAW).

This chain is Coiled-coil domain-containing protein 70 (CCDC70), found in Bos taurus (Bovine).